A 265-amino-acid chain; its full sequence is Indole-3-glycerol phosphate synthase (265 aa).

Belongs to the TrpC family.

The enzyme catalyses 1-(2-carboxyphenylamino)-1-deoxy-D-ribulose 5-phosphate + H(+) = (1S,2R)-1-C-(indol-3-yl)glycerol 3-phosphate + CO2 + H2O. It functions in the pathway amino-acid biosynthesis; L-tryptophan biosynthesis; L-tryptophan from chorismate: step 4/5. In Xanthomonas euvesicatoria pv. vesicatoria (strain 85-10) (Xanthomonas campestris pv. vesicatoria), this protein is Indole-3-glycerol phosphate synthase.